Reading from the N-terminus, the 771-residue chain is Glucocorticoid receptor (771 aa).

The interval 1–415 is modulating; the sequence is MDLKESVTSS…STTTGPPPKL (415 aa). T8 is modified (phosphothreonine). An Omega-N-methylarginine modification is found at R22. Phosphoserine occurs at positions 44, 133, 199, 207, and 222. Over residues 129–172 the composition is skewed to polar residues; sequence SRSTSVPENPKNSASAVSGTPTEEFPKTQSDLSSEQENLKSQAG. Positions 129–184 are disordered; it reads SRSTSVPENPKNSASAVSGTPTEEFPKTQSDLSSEQENLKSQAGTNGGNVKFPPDQ. K254 participates in a covalent cross-link: Glycyl lysine isopeptide (Lys-Gly) (interchain with G-Cter in SUMO2). Residue S263 is modified to Phosphoserine. Glycyl lysine isopeptide (Lys-Gly) (interchain with G-Cter in SUMO); alternate cross-links involve residues K273 and K289. Glycyl lysine isopeptide (Lys-Gly) (interchain with G-Cter in SUMO2); alternate cross-links involve residues K273 and K289. Phosphoserine occurs at positions 303 and 400. The interval 390–411 is disordered; that stretch reads SSPGLRPDVSSPPSSSSTTTGP. Positions 400 to 409 are enriched in low complexity; sequence SPPSSSSTTT. K414 participates in a covalent cross-link: Glycyl lysine isopeptide (Lys-Gly) (interchain with G-Cter in ubiquitin). NR C4-type zinc fingers lie at residues 416 to 436 and 452 to 476; these read CLVC…CGSC and CAGR…YRKC. The segment at residues 416-481 is a DNA-binding region (nuclear receptor); sequence CLVCSDELSG…RYRKCLQAGM (66 aa). 4 positions are modified to N6-acetyllysine: K475, K487, K489, and K490. The tract at residues 480 to 771 is interaction with CLOCK; it reads GMNLQARKTK…DIKKLLFHQK (292 aa). Positions 482-517 are hinge; it reads NLQARKTKKKIKGIQQATTGVSQNTSENPNKTIVPA. An NR LBD domain is found at 518–752; it reads TLPQLTPTLV…FPEMLAEIIT (235 aa). Residues 526-691 are interaction with CRY1; that stretch reads LVSLLEVIEP…EIRMTYIKEL (166 aa). Residue K697 forms a Glycyl lysine isopeptide (Lys-Gly) (interchain with G-Cter in SUMO) linkage.

It belongs to the nuclear hormone receptor family. NR3 subfamily. In terms of assembly, heteromultimeric cytoplasmic complex with HSP90AA1, HSPA1A/HSPA1B, and FKBP5 or another immunophilin such as PPID, STIP1, or the immunophilin homolog PPP5C. Upon ligand binding FKBP5 dissociates from the complex and FKBP4 takes its place, thereby linking the complex to dynein and mediating transport to the nucleus, where the complex dissociates. Probably forms a complex composed of chaperones HSP90 and HSP70, co-chaperones CDC37, PPP5C, TSC1 and client protein TSC2, CDK4, AKT, RAF1 and NR3C1; this complex does not contain co-chaperones STIP1/HOP and PTGES3/p23. Directly interacts with UNC45A. Binds to DNA as a homodimer, and as heterodimer with NR3C2 or the retinoid X receptor. Binds STAT5A and STAT5B homodimers and heterodimers. Interacts with NRIP1, POU2F1, POU2F2 and TRIM28. Interacts with several coactivator complexes, including the SMARCA4 complex, CREBBP/EP300, TADA2L (Ada complex) and p160 coactivators such as NCOA2 and NCOA6. Interaction with BAG1 inhibits transactivation. Interacts with HEXIM1 and TGFB1I1. Interacts with NCOA1. Interacts with NCOA3, SMARCA4, SMARCC1, SMARCD1, and SMARCE1. Interacts with CLOCK, CRY1 and CRY2 in a ligand-dependent fashion. Interacts with CIART. Interacts with RWDD3. Interacts with UBE2I/UBC9 and this interaction is enhanced in the presence of RWDD3. Interacts with GRIP1. Interacts with NR4A3 (via nuclear receptor DNA-binding domain), represses transcription activity of NR4A3 on the POMC promoter Nur response element (NurRE). Directly interacts with PNRC2 to attract and form a complex with UPF1 and DCP1A; the interaction leads to rapid mRNA degradation. Interacts with GSK3B. Interacts with FNIP1 and FNIP2. Interacts (via C-terminus) with HNRNPU (via C-terminus). Interacts with MCM3AP. Interacts (via domain NR LBD) with HSP90AA1 and HSP90AB1. In the absence of hormonal ligand, interacts with TACC1. Interacts (via NR LBD domain) with ZNF764 (via KRAB domain); the interaction regulates transcription factor activity of NR3C1 by directing its actions toward certain biologic pathways. Acetylation by CLOCK reduces its binding to glucocorticoid response elements and its transcriptional activity. Post-translationally, increased proteasome-mediated degradation in response to glucocorticoids. In terms of processing, phosphorylated in the absence of hormone; becomes hyperphosphorylated in the presence of glucocorticoid. The Ser-199, Ser-222 and Ser-400-phosphorylated forms are mainly cytoplasmic, and the Ser-207-phosphorylated form is nuclear. Phosphorylation at Ser-207 increases transcriptional activity. Phosphorylation at Ser-199, Ser-222 and Ser-400 decreases signaling capacity. Phosphorylation at Ser-400 may protect from glucocorticoid-induced apoptosis. Phosphorylation at Ser-199 and Ser-207 is not required in regulation of chromosome segregation. May be dephosphorylated by PPP5C, attenuates NR3C1 action. Ubiquitinated by UBR5, leading to its degradation: UBR5 specifically recognizes and binds ligand-bound NR3C1 when it is not associated with coactivators (NCOAs). In presence of NCOAs, the UBR5-degron is not accessible, preventing its ubiquitination and degradation. Post-translationally, sumoylation at Lys-273 and Lys-289 negatively regulates its transcriptional activity. Sumoylation at Lys-697 positively regulates its transcriptional activity in the presence of RWDD3. Sumoylation at Lys-273 and Lys-289 is dispensable whereas sumoylation at Lys-697 is critical for the stimulatory effect of RWDD3 on its transcriptional activity. Heat shock increases sumoylation in a RWDD3-dependent manner.

Its subcellular location is the cytoplasm. The protein localises to the nucleus. It localises to the mitochondrion. The protein resides in the cytoskeleton. It is found in the spindle. Its subcellular location is the microtubule organizing center. The protein localises to the centrosome. It localises to the chromosome. The protein resides in the nucleoplasm. Its function is as follows. Receptor for glucocorticoids (GC). Has a dual mode of action: as a transcription factor that binds to glucocorticoid response elements (GRE), both for nuclear and mitochondrial DNA, and as a modulator of other transcription factors. Affects inflammatory responses, cellular proliferation and differentiation in target tissues. Involved in chromatin remodeling. Plays a role in rapid mRNA degradation by binding to the 5' UTR of target mRNAs and interacting with PNRC2 in a ligand-dependent manner which recruits the RNA helicase UPF1 and the mRNA-decapping enzyme DCP1A, leading to RNA decay. Could act as a coactivator for STAT5-dependent transcription upon growth hormone (GH) stimulation and could reveal an essential role of hepatic GR in the control of body growth. Mediates glucocorticoid-induced apoptosis. Promotes accurate chromosome segregation during mitosis. May act as a tumor suppressor. May play a negative role in adipogenesis through the regulation of lipolytic and antilipogenic gene expression. The protein is Glucocorticoid receptor (NR3C1) of Cavia porcellus (Guinea pig).